The following is a 509-amino-acid chain: ATP synthase subunit alpha (509 aa).

An ATP-binding site is contributed by 169–176 (GDRQTGKT).

The protein belongs to the ATPase alpha/beta chains family. F-type ATPases have 2 components, CF(1) - the catalytic core - and CF(0) - the membrane proton channel. CF(1) has five subunits: alpha(3), beta(3), gamma(1), delta(1), epsilon(1). CF(0) has three main subunits: a(1), b(2) and c(9-12). The alpha and beta chains form an alternating ring which encloses part of the gamma chain. CF(1) is attached to CF(0) by a central stalk formed by the gamma and epsilon chains, while a peripheral stalk is formed by the delta and b chains.

It localises to the cell inner membrane. It carries out the reaction ATP + H2O + 4 H(+)(in) = ADP + phosphate + 5 H(+)(out). In terms of biological role, produces ATP from ADP in the presence of a proton gradient across the membrane. The alpha chain is a regulatory subunit. The polypeptide is ATP synthase subunit alpha (Xanthobacter autotrophicus (strain ATCC BAA-1158 / Py2)).